Consider the following 831-residue polypeptide: Translation initiation factor IF-2 (831 aa).

A tr-type G domain is found at 329–499 (TRAPVVTVMG…LLIAEMQDLK (171 aa)). Positions 338-345 (GHVDHGKT) are G1. Residue 338–345 (GHVDHGKT) coordinates GTP. Positions 363-367 (GITQH) are G2. The G3 stretch occupies residues 385–388 (DTPG). GTP contacts are provided by residues 385 to 389 (DTPGH) and 439 to 442 (NKID). The segment at 439–442 (NKID) is G4. The tract at residues 475 to 477 (SAL) is G5.

The protein belongs to the TRAFAC class translation factor GTPase superfamily. Classic translation factor GTPase family. IF-2 subfamily.

The protein resides in the cytoplasm. One of the essential components for the initiation of protein synthesis. Protects formylmethionyl-tRNA from spontaneous hydrolysis and promotes its binding to the 30S ribosomal subunits. Also involved in the hydrolysis of GTP during the formation of the 70S ribosomal complex. The chain is Translation initiation factor IF-2 from Rickettsia rickettsii (strain Iowa).